The sequence spans 203 residues: Outer-membrane lipoprotein carrier protein (203 aa).

Residues Met-1 to Ala-21 form the signal peptide.

Belongs to the LolA family. Monomer.

The protein resides in the periplasm. Participates in the translocation of lipoproteins from the inner membrane to the outer membrane. Only forms a complex with a lipoprotein if the residue after the N-terminal Cys is not an aspartate (The Asp acts as a targeting signal to indicate that the lipoprotein should stay in the inner membrane). The chain is Outer-membrane lipoprotein carrier protein from Sodalis glossinidius (strain morsitans).